The following is a 641-amino-acid chain: SH2 domain-containing protein A (641 aa).

The disordered stretch occupies residues 355–384 (VNGNGTSMEWRPQNHEEDNSSTDSENTEMR). The 95-residue stretch at 547-641 (WIEGFVTKEE…SRLGRIIRGI (95 aa)) folds into the SH2 domain.

In terms of processing, phosphorylated on tyrosine residues. In terms of tissue distribution, expressed in roots, leaves, stems and flowers.

This is SH2 domain-containing protein A from Arabidopsis thaliana (Mouse-ear cress).